Reading from the N-terminus, the 167-residue chain is Regulator of sigma D (167 aa).

It belongs to the Rsd/AlgQ family. Interacts with RpoD.

Its subcellular location is the cytoplasm. Its function is as follows. Binds RpoD and negatively regulates RpoD-mediated transcription activation by preventing the interaction between the primary sigma factor RpoD with the catalytic core of the RNA polymerase and with promoter DNA. May be involved in replacement of the RNA polymerase sigma subunit from RpoD to RpoS during the transition from exponential growth to the stationary phase. In Yersinia enterocolitica serotype O:8 / biotype 1B (strain NCTC 13174 / 8081), this protein is Regulator of sigma D.